The following is a 151-amino-acid chain: U-scoloptoxin(17)-Er2a (151 aa).

Positions 1-22 (MKSFFVVFAIVFQATLVALSLA) are cleaved as a signal peptide.

It belongs to the scoloptoxin-17 family. Post-translationally, contains 5 disulfide bonds. In terms of tissue distribution, expressed by the venom gland.

The protein resides in the secreted. In Ethmostigmus rubripes (Giant centipede), this protein is U-scoloptoxin(17)-Er2a.